The following is an 84-amino-acid chain: MSSGGLLLLLGLLTLWAELTPISGHDRPTFCNLAPESGRCRGHLRRIYYNLESNKCEVFFYGGCGGNDNNFSTRDECRHTCVGK.

The first 24 residues, 1–24 (MSSGGLLLLLGLLTLWAELTPISG), serve as a signal peptide directing secretion. The 51-residue stretch at 31-81 (CNLAPESGRCRGHLRRIYYNLESNKCEVFFYGGCGGNDNNFSTRDECRHTC) folds into the BPTI/Kunitz inhibitor domain. 3 cysteine pairs are disulfide-bonded: Cys31–Cys81, Cys40–Cys64, and Cys56–Cys77. Asn70 is a glycosylation site (N-linked (GlcNAc...) asparagine).

This sequence belongs to the venom Kunitz-type family. In terms of tissue distribution, expressed by the venom gland.

The protein resides in the secreted. Functionally, serine protease inhibitor that inhibits plasmin and trypsin. The polypeptide is Kunitz-type serine protease inhibitor B3 (Daboia siamensis (Eastern Russel's viper)).